The primary structure comprises 588 residues: Beta-(1--&gt;2)glucan export ATP-binding/permease protein NdvA (588 aa).

Residues 21–301 (VAVVVIANVI…MRQFVTQIFE (281 aa)) enclose the ABC transmembrane type-1 domain. The next 6 helical transmembrane spans lie at 22 to 42 (AVVV…PVLF), 57 to 77 (PILI…VAVA), 136 to 156 (THLA…AMDL), 158 to 178 (LSFV…WVMG), 248 to 268 (TAST…VKNG), and 272 to 292 (VGDV…LDQM). Residues 335 to 569 (VEFRNINFGF…GGRFTSLLRT (235 aa)) form the ABC transporter domain. 368–375 (GPTGAGKT) provides a ligand contact to ATP.

This sequence belongs to the ABC transporter superfamily. Beta-(1--&gt;2)glucan exporter (TC 3.A.1.108.1) family. Homodimer.

It is found in the cell inner membrane. The catalysed reaction is [(1-&gt;2)-beta-D-glucosyl](n)(in) + ATP + H2O = [(1-&gt;2)-beta-D-glucosyl](n)(out) + ADP + phosphate + H(+). Involved in beta-(1--&gt;2)glucan export which is required for crown gall tumor formation. Transmembrane domains (TMD) form a pore in the inner membrane and the ATP-binding domain (NBD) is responsible for energy generation. In Rhizobium radiobacter (Agrobacterium tumefaciens), this protein is Beta-(1--&gt;2)glucan export ATP-binding/permease protein NdvA.